The chain runs to 470 residues: Argininosuccinate lyase (470 aa).

Belongs to the lyase 1 family. Argininosuccinate lyase subfamily.

It localises to the cytoplasm. The catalysed reaction is 2-(N(omega)-L-arginino)succinate = fumarate + L-arginine. It functions in the pathway amino-acid biosynthesis; L-arginine biosynthesis; L-arginine from L-ornithine and carbamoyl phosphate: step 3/3. The polypeptide is Argininosuccinate lyase (Leptospira borgpetersenii serovar Hardjo-bovis (strain JB197)).